Consider the following 507-residue polypeptide: Alpha-amylase 2 (507 aa).

Residues Met-1–Ser-20 form the signal peptide. A disulfide bond links Cys-62 and Cys-70. Trp-115 lines the substrate pocket. Asn-153 contributes to the Ca(2+) binding site. His-154 contributes to the substrate binding site. Cys-182 and Cys-196 are disulfide-bonded. Ca(2+) is bound by residues Glu-194 and Asp-207. A glycan (N-linked (GlcNAc...) asparagine) is linked at Asn-229. A substrate-binding site is contributed by Arg-236. Ca(2+)-binding residues include Asp-238, His-242, and Glu-262. Asp-238 functions as the Nucleophile in the catalytic mechanism. Lys-241–His-242 is a substrate binding site. Catalysis depends on Glu-262, which acts as the Proton donor. Gly-266 provides a ligand contact to substrate. Residues Cys-272 and Cys-315 are joined by a disulfide bond. 2 residues coordinate substrate: Asp-329 and Arg-376. A disulfide bond links Cys-470 and Cys-505.

Belongs to the glycosyl hydrolase 13 family. Ca(2+) is required as a cofactor.

It catalyses the reaction Endohydrolysis of (1-&gt;4)-alpha-D-glucosidic linkages in polysaccharides containing three or more (1-&gt;4)-alpha-linked D-glucose units.. The sequence is that of Alpha-amylase 2 (SWA2) from Schwanniomyces occidentalis (Yeast).